The sequence spans 496 residues: Probable cytosol aminopeptidase (496 aa).

Lysine 261 and aspartate 266 together coordinate Mn(2+). Lysine 273 is an active-site residue. Aspartate 284, aspartate 343, and glutamate 345 together coordinate Mn(2+). Arginine 347 is a catalytic residue.

The protein belongs to the peptidase M17 family. Requires Mn(2+) as cofactor.

It localises to the cytoplasm. It catalyses the reaction Release of an N-terminal amino acid, Xaa-|-Yaa-, in which Xaa is preferably Leu, but may be other amino acids including Pro although not Arg or Lys, and Yaa may be Pro. Amino acid amides and methyl esters are also readily hydrolyzed, but rates on arylamides are exceedingly low.. It carries out the reaction Release of an N-terminal amino acid, preferentially leucine, but not glutamic or aspartic acids.. Functionally, presumably involved in the processing and regular turnover of intracellular proteins. Catalyzes the removal of unsubstituted N-terminal amino acids from various peptides. In Bacillus licheniformis (strain ATCC 14580 / DSM 13 / JCM 2505 / CCUG 7422 / NBRC 12200 / NCIMB 9375 / NCTC 10341 / NRRL NRS-1264 / Gibson 46), this protein is Probable cytosol aminopeptidase.